We begin with the raw amino-acid sequence, 703 residues long: tRNA 5-methylaminomethyl-2-thiouridine biosynthesis bifunctional protein MnmC (703 aa).

The tRNA (mnm(5)s(2)U34)-methyltransferase stretch occupies residues 1–281 (MTAKPQKSCQ…KPAALVAKDH (281 aa)). The interval 286–703 (VGGGLASANL…LRKLLKGKAL (418 aa)) is FAD-dependent cmnm(5)s(2)U34 oxidoreductase.

This sequence in the N-terminal section; belongs to the methyltransferase superfamily. tRNA (mnm(5)s(2)U34)-methyltransferase family. In the C-terminal section; belongs to the DAO family. FAD is required as a cofactor.

The protein resides in the cytoplasm. The enzyme catalyses 5-aminomethyl-2-thiouridine(34) in tRNA + S-adenosyl-L-methionine = 5-methylaminomethyl-2-thiouridine(34) in tRNA + S-adenosyl-L-homocysteine + H(+). Its function is as follows. Catalyzes the last two steps in the biosynthesis of 5-methylaminomethyl-2-thiouridine (mnm(5)s(2)U) at the wobble position (U34) in tRNA. Catalyzes the FAD-dependent demodification of cmnm(5)s(2)U34 to nm(5)s(2)U34, followed by the transfer of a methyl group from S-adenosyl-L-methionine to nm(5)s(2)U34, to form mnm(5)s(2)U34. In Shewanella sp. (strain MR-7), this protein is tRNA 5-methylaminomethyl-2-thiouridine biosynthesis bifunctional protein MnmC.